Consider the following 1438-residue polypeptide: DNA-directed RNA polymerase subunit beta' (1438 aa).

Residues Cys70, Cys72, Cys85, and Cys88 each coordinate Zn(2+). Residues Asp461, Asp463, and Asp465 each contribute to the Mg(2+) site. Zn(2+)-binding residues include Cys821, Cys895, Cys902, and Cys905. Over residues 1413–1427 the composition is skewed to low complexity; the sequence is DAMAAAMGGDSAGGD. The interval 1413-1438 is disordered; the sequence is DAMAAAMGGDSAGGDTKPEAPEASEE.

This sequence belongs to the RNA polymerase beta' chain family. As to quaternary structure, the RNAP catalytic core consists of 2 alpha, 1 beta, 1 beta' and 1 omega subunit. When a sigma factor is associated with the core the holoenzyme is formed, which can initiate transcription. It depends on Mg(2+) as a cofactor. Zn(2+) is required as a cofactor.

The enzyme catalyses RNA(n) + a ribonucleoside 5'-triphosphate = RNA(n+1) + diphosphate. DNA-dependent RNA polymerase catalyzes the transcription of DNA into RNA using the four ribonucleoside triphosphates as substrates. The protein is DNA-directed RNA polymerase subunit beta' of Erythrobacter litoralis (strain HTCC2594).